The chain runs to 290 residues: Nucleotide-binding protein XfasM23_0667 (290 aa).

An ATP-binding site is contributed by Gly-13–Ser-20. Asp-65 to Ser-68 is a binding site for GTP.

It belongs to the RapZ-like family.

Displays ATPase and GTPase activities. This Xylella fastidiosa (strain M23) protein is Nucleotide-binding protein XfasM23_0667.